The following is a 96-amino-acid chain: Myticin-A (96 aa).

Positions Met1 to Ala20 are cleaved as a signal peptide. Residues Val61–Leu96 constitute a propeptide, removed in mature form.

In terms of processing, contains four disulfide bonds. In terms of tissue distribution, hemocytes.

The protein localises to the secreted. In terms of biological role, bacteriolytic activity against Gram-positive bacteria M.luteus, B.megaterium and A.viridans. This chain is Myticin-A, found in Mytilus galloprovincialis (Mediterranean mussel).